Consider the following 619-residue polypeptide: Isocitrate dehydrogenase kinase/phosphatase (619 aa).

ATP-binding positions include 354 to 360 and K375; that span reads APGIRGM. D409 is an active-site residue.

This sequence belongs to the AceK family.

It is found in the cytoplasm. It catalyses the reaction L-seryl-[isocitrate dehydrogenase] + ATP = O-phospho-L-seryl-[isocitrate dehydrogenase] + ADP + H(+). Its function is as follows. Bifunctional enzyme which can phosphorylate or dephosphorylate isocitrate dehydrogenase (IDH) on a specific serine residue. This is a regulatory mechanism which enables bacteria to bypass the Krebs cycle via the glyoxylate shunt in response to the source of carbon. When bacteria are grown on glucose, IDH is fully active and unphosphorylated, but when grown on acetate or ethanol, the activity of IDH declines drastically concomitant with its phosphorylation. The sequence is that of Isocitrate dehydrogenase kinase/phosphatase from Bordetella bronchiseptica (strain ATCC BAA-588 / NCTC 13252 / RB50) (Alcaligenes bronchisepticus).